The following is a 177-amino-acid chain: Large ribosomal subunit protein uL6 (177 aa).

The protein belongs to the universal ribosomal protein uL6 family. As to quaternary structure, part of the 50S ribosomal subunit.

In terms of biological role, this protein binds to the 23S rRNA, and is important in its secondary structure. It is located near the subunit interface in the base of the L7/L12 stalk, and near the tRNA binding site of the peptidyltransferase center. This Rhodopseudomonas palustris (strain BisA53) protein is Large ribosomal subunit protein uL6.